We begin with the raw amino-acid sequence, 148 residues long: Small ribosomal subunit protein eS6 (148 aa).

Belongs to the eukaryotic ribosomal protein eS6 family.

The sequence is that of Small ribosomal subunit protein eS6 from Pyrobaculum aerophilum (strain ATCC 51768 / DSM 7523 / JCM 9630 / CIP 104966 / NBRC 100827 / IM2).